Here is a 90-residue protein sequence, read N- to C-terminus: Elongation factor 1-beta (90 aa).

The protein belongs to the EF-1-beta/EF-1-delta family.

Its function is as follows. Promotes the exchange of GDP for GTP in EF-1-alpha/GDP, thus allowing the regeneration of EF-1-alpha/GTP that could then be used to form the ternary complex EF-1-alpha/GTP/AAtRNA. This Aeropyrum pernix (strain ATCC 700893 / DSM 11879 / JCM 9820 / NBRC 100138 / K1) protein is Elongation factor 1-beta (ef1b).